A 304-amino-acid chain; its full sequence is Release factor glutamine methyltransferase (304 aa).

Residues Asp-144 and Asn-188 each contribute to the S-adenosyl-L-methionine site. 188-191 serves as a coordination point for substrate; that stretch reads NPPY.

Belongs to the protein N5-glutamine methyltransferase family. PrmC subfamily.

The catalysed reaction is L-glutaminyl-[peptide chain release factor] + S-adenosyl-L-methionine = N(5)-methyl-L-glutaminyl-[peptide chain release factor] + S-adenosyl-L-homocysteine + H(+). Methylates the class 1 translation termination release factors RF1/PrfA and RF2/PrfB on the glutamine residue of the universally conserved GGQ motif. This is Release factor glutamine methyltransferase from Mycobacterium tuberculosis (strain ATCC 25618 / H37Rv).